The chain runs to 31 residues: Cytochrome b6-f complex subunit 6 (31 aa).

Residues 4–24 (ITSYFGFLLAALTLTLALFIG) form a helical membrane-spanning segment.

This sequence belongs to the PetL family. In terms of assembly, the 4 large subunits of the cytochrome b6-f complex are cytochrome b6, subunit IV (17 kDa polypeptide, PetD), cytochrome f and the Rieske protein, while the 4 small subunits are PetG, PetL, PetM and PetN. The complex functions as a dimer.

It localises to the plastid. Its subcellular location is the chloroplast thylakoid membrane. Component of the cytochrome b6-f complex, which mediates electron transfer between photosystem II (PSII) and photosystem I (PSI), cyclic electron flow around PSI, and state transitions. PetL is important for photoautotrophic growth as well as for electron transfer efficiency and stability of the cytochrome b6-f complex. This Oryza sativa subsp. japonica (Rice) protein is Cytochrome b6-f complex subunit 6.